Here is a 94-residue protein sequence, read N- to C-terminus: Conotoxin Qc6.1 (94 aa).

The first 22 residues, 1–22, serve as a signal peptide directing secretion; that stretch reads MKLTCMMIVALLFLTAWTFVTA. A propeptide spanning residues 23 to 62 is cleaved from the precursor; that stretch reads VDSKNELENRGGWGQAGGWGKLFPMARDEMKNSEVSKLDN. 3 cysteine pairs are disulfide-bonded: C66–C84, C73–C88, and C83–C92.

Belongs to the conotoxin O1 superfamily. Expressed by the venom duct.

The protein resides in the secreted. The sequence is that of Conotoxin Qc6.1 from Conus quercinus (Oak cone).